A 125-amino-acid polypeptide reads, in one-letter code: Small ribosomal subunit protein uS13 (125 aa).

The tract at residues 92 to 125 is disordered; the sequence is RRSLPVRGQRTQTNARTRKGKRKTVAGKKKATKK. The segment covering 107–125 has biased composition (basic residues); it reads RTRKGKRKTVAGKKKATKK.

This sequence belongs to the universal ribosomal protein uS13 family. Part of the 30S ribosomal subunit. Forms a loose heterodimer with protein S19. Forms two bridges to the 50S subunit in the 70S ribosome.

Located at the top of the head of the 30S subunit, it contacts several helices of the 16S rRNA. In the 70S ribosome it contacts the 23S rRNA (bridge B1a) and protein L5 of the 50S subunit (bridge B1b), connecting the 2 subunits; these bridges are implicated in subunit movement. Contacts the tRNAs in the A and P-sites. The chain is Small ribosomal subunit protein uS13 from Chlorobium limicola (strain DSM 245 / NBRC 103803 / 6330).